We begin with the raw amino-acid sequence, 519 residues long: Ribonuclease Y 1 (519 aa).

The helical transmembrane segment at 2–22 (IILYIILAIIAIVVGYCAGFF) threads the bilayer. Positions 84–113 (QKQEDRLLQREDSLDRKDNSFEKRENSLER) are disordered. The 86-residue stretch at 209 to 294 (TITVVSLPND…EMVEKAKKEM (86 aa)) folds into the KH domain. Positions 335-428 (VLNHSIEVAN…VAAANSISAA (94 aa)) constitute an HD domain.

It belongs to the RNase Y family.

Its subcellular location is the cell membrane. Its function is as follows. Endoribonuclease that initiates mRNA decay. The chain is Ribonuclease Y 1 from Pediococcus pentosaceus (strain ATCC 25745 / CCUG 21536 / LMG 10740 / 183-1w).